The sequence spans 690 residues: Glycine--tRNA ligase beta subunit (690 aa).

Belongs to the class-II aminoacyl-tRNA synthetase family. Tetramer of two alpha and two beta subunits.

The protein resides in the cytoplasm. The enzyme catalyses tRNA(Gly) + glycine + ATP = glycyl-tRNA(Gly) + AMP + diphosphate. The sequence is that of Glycine--tRNA ligase beta subunit from Buchnera aphidicola subsp. Acyrthosiphon pisum (strain Tuc7).